The chain runs to 240 residues: Phosphoribosyl isomerase A (240 aa).

The Proton acceptor role is filled by aspartate 11. The active-site Proton donor is the aspartate 130.

Belongs to the HisA/HisF family. In terms of assembly, monomer.

The protein resides in the cytoplasm. The enzyme catalyses 1-(5-phospho-beta-D-ribosyl)-5-[(5-phospho-beta-D-ribosylamino)methylideneamino]imidazole-4-carboxamide = 5-[(5-phospho-1-deoxy-D-ribulos-1-ylimino)methylamino]-1-(5-phospho-beta-D-ribosyl)imidazole-4-carboxamide. It catalyses the reaction N-(5-phospho-beta-D-ribosyl)anthranilate = 1-(2-carboxyphenylamino)-1-deoxy-D-ribulose 5-phosphate. It functions in the pathway amino-acid biosynthesis; L-histidine biosynthesis; L-histidine from 5-phospho-alpha-D-ribose 1-diphosphate: step 4/9. The protein operates within amino-acid biosynthesis; L-tryptophan biosynthesis; L-tryptophan from chorismate: step 3/5. Functionally, catalyzes the isomerization of the aminoaldose moiety of ProFAR to the aminoketose of PRFAR in the biosynthesis pathway for histidine and the isomerization of the aminoaldose PRA to the aminoketose CdRP in the biosynthsis pathway for tryptophan. The sequence is that of Phosphoribosyl isomerase A (priA) from Streptomyces coelicolor (strain ATCC BAA-471 / A3(2) / M145).